The following is a 61-amino-acid chain: Small ribosomal subunit protein uS14B (61 aa).

Positions 24, 27, 40, and 43 each coordinate Zn(2+).

The protein belongs to the universal ribosomal protein uS14 family. Zinc-binding uS14 subfamily. As to quaternary structure, part of the 30S ribosomal subunit. Contacts proteins S3 and S10. Requires Zn(2+) as cofactor.

Binds 16S rRNA, required for the assembly of 30S particles and may also be responsible for determining the conformation of the 16S rRNA at the A site. This is Small ribosomal subunit protein uS14B from Streptomyces avermitilis (strain ATCC 31267 / DSM 46492 / JCM 5070 / NBRC 14893 / NCIMB 12804 / NRRL 8165 / MA-4680).